The primary structure comprises 302 residues: 4-diphosphocytidyl-2-C-methyl-D-erythritol kinase (302 aa).

Lysine 27 is an active-site residue. 110–120 (PMGGGVGGGSS) lines the ATP pocket. Aspartate 152 is an active-site residue.

It belongs to the GHMP kinase family. IspE subfamily.

The enzyme catalyses 4-CDP-2-C-methyl-D-erythritol + ATP = 4-CDP-2-C-methyl-D-erythritol 2-phosphate + ADP + H(+). It functions in the pathway isoprenoid biosynthesis; isopentenyl diphosphate biosynthesis via DXP pathway; isopentenyl diphosphate from 1-deoxy-D-xylulose 5-phosphate: step 3/6. Functionally, catalyzes the phosphorylation of the position 2 hydroxy group of 4-diphosphocytidyl-2C-methyl-D-erythritol. This is 4-diphosphocytidyl-2-C-methyl-D-erythritol kinase from Mannheimia succiniciproducens (strain KCTC 0769BP / MBEL55E).